The primary structure comprises 226 residues: UPF0758 protein LL1007 (226 aa).

The MPN domain occupies 103–225 (QVLSSREYGL…YFSFREEEIR (123 aa)). Zn(2+) contacts are provided by His-174, His-176, and Asp-187. Positions 174–187 (HNHPSGNLKPSQAD) match the JAMM motif motif.

Belongs to the UPF0758 family.

The sequence is that of UPF0758 protein LL1007 from Lactococcus lactis subsp. lactis (strain IL1403) (Streptococcus lactis).